The chain runs to 395 residues: Elongation factor Tu (395 aa).

One can recognise a tr-type G domain in the interval 10-204; the sequence is KPHVNIGTIG…IVDEYIPTPE (195 aa). The interval 19 to 26 is G1; sequence GHVDHGKT. Position 19–26 (19–26) interacts with GTP; the sequence is GHVDHGKT. Residue T26 coordinates Mg(2+). The G2 stretch occupies residues 60–64; the sequence is GITIN. Positions 81–84 are G3; it reads DAPG. GTP is bound by residues 81–85 and 136–139; these read DAPGH and NKAD. Residues 136–139 form a G4 region; that stretch reads NKAD. Residues 174-176 form a G5 region; sequence SAL.

The protein belongs to the TRAFAC class translation factor GTPase superfamily. Classic translation factor GTPase family. EF-Tu/EF-1A subfamily. As to quaternary structure, monomer.

It is found in the cytoplasm. The enzyme catalyses GTP + H2O = GDP + phosphate + H(+). Functionally, GTP hydrolase that promotes the GTP-dependent binding of aminoacyl-tRNA to the A-site of ribosomes during protein biosynthesis. The protein is Elongation factor Tu of Lactococcus lactis subsp. lactis (strain IL1403) (Streptococcus lactis).